The sequence spans 220 residues: Peptide methionine sulfoxide reductase MsrA (220 aa).

C54 is a catalytic residue.

The protein belongs to the MsrA Met sulfoxide reductase family.

It carries out the reaction L-methionyl-[protein] + [thioredoxin]-disulfide + H2O = L-methionyl-(S)-S-oxide-[protein] + [thioredoxin]-dithiol. It catalyses the reaction [thioredoxin]-disulfide + L-methionine + H2O = L-methionine (S)-S-oxide + [thioredoxin]-dithiol. Its function is as follows. Has an important function as a repair enzyme for proteins that have been inactivated by oxidation. Catalyzes the reversible oxidation-reduction of methionine sulfoxide in proteins to methionine. The chain is Peptide methionine sulfoxide reductase MsrA from Salinispora arenicola (strain CNS-205).